The sequence spans 58 residues: Preprotein translocase subunit SecG (58 aa).

Topologically, residues 1–32 (MARKRRKGGEGLVTAIGLVRFYEEVEEKIKVP) are cytoplasmic. A helical membrane pass occupies residues 33–54 (PEAVIGAAFALSIMTIALDLLL). Topologically, residues 55–58 (KAAR) are extracellular.

It belongs to the SEC61-beta family. Component of the protein translocase complex. Heterotrimer consisting of alpha (SecY), beta (SecG) and gamma (SecE) subunits. Can form oligomers of the heterotrimer.

It is found in the cell membrane. Involved in protein export. The function of the beta subunit is unknown, but it may be involved in stabilization of the trimeric complex. This chain is Preprotein translocase subunit SecG, found in Ignicoccus hospitalis (strain KIN4/I / DSM 18386 / JCM 14125).